We begin with the raw amino-acid sequence, 223 residues long: Deoxyribose-phosphate aldolase (223 aa).

Asp89 serves as the catalytic Proton donor/acceptor. Catalysis depends on Lys152, which acts as the Schiff-base intermediate with acetaldehyde. The Proton donor/acceptor role is filled by Lys181.

It belongs to the DeoC/FbaB aldolase family. DeoC type 1 subfamily.

It is found in the cytoplasm. The enzyme catalyses 2-deoxy-D-ribose 5-phosphate = D-glyceraldehyde 3-phosphate + acetaldehyde. It participates in carbohydrate degradation; 2-deoxy-D-ribose 1-phosphate degradation; D-glyceraldehyde 3-phosphate and acetaldehyde from 2-deoxy-alpha-D-ribose 1-phosphate: step 2/2. In terms of biological role, catalyzes a reversible aldol reaction between acetaldehyde and D-glyceraldehyde 3-phosphate to generate 2-deoxy-D-ribose 5-phosphate. In Bacillus cereus (strain AH187), this protein is Deoxyribose-phosphate aldolase.